Consider the following 482-residue polypeptide: UDP-N-acetylmuramate--L-alanine ligase (482 aa).

123–129 serves as a coordination point for ATP; sequence GTHGKTT.

The protein belongs to the MurCDEF family.

The protein localises to the cytoplasm. It catalyses the reaction UDP-N-acetyl-alpha-D-muramate + L-alanine + ATP = UDP-N-acetyl-alpha-D-muramoyl-L-alanine + ADP + phosphate + H(+). Its pathway is cell wall biogenesis; peptidoglycan biosynthesis. In terms of biological role, cell wall formation. This is UDP-N-acetylmuramate--L-alanine ligase from Pseudomonas putida (strain GB-1).